A 247-amino-acid chain; its full sequence is Adenosylcobinamide-GDP ribazoletransferase (247 aa).

The next 5 membrane-spanning stretches (helical) occupy residues 34-54 (IVMF…IFIL), 59-79 (CGIP…TGGF), 113-133 (GGLA…ELAL), 138-158 (MLAA…LLMY), and 194-214 (VLLL…AIFI).

It belongs to the CobS family. Requires Mg(2+) as cofactor.

It localises to the cell inner membrane. The catalysed reaction is alpha-ribazole + adenosylcob(III)inamide-GDP = adenosylcob(III)alamin + GMP + H(+). It catalyses the reaction alpha-ribazole 5'-phosphate + adenosylcob(III)inamide-GDP = adenosylcob(III)alamin 5'-phosphate + GMP + H(+). The protein operates within cofactor biosynthesis; adenosylcobalamin biosynthesis; adenosylcobalamin from cob(II)yrinate a,c-diamide: step 7/7. Joins adenosylcobinamide-GDP and alpha-ribazole to generate adenosylcobalamin (Ado-cobalamin). Also synthesizes adenosylcobalamin 5'-phosphate from adenosylcobinamide-GDP and alpha-ribazole 5'-phosphate. In Salmonella typhi, this protein is Adenosylcobinamide-GDP ribazoletransferase.